The primary structure comprises 303 residues: Protoheme IX farnesyltransferase (303 aa).

The next 8 helical transmembrane spans lie at 25 to 45 (MGLV…AIVL), 54 to 74 (IPQI…ACAL), 104 to 124 (LLIL…ILNI), 125 to 145 (PSGV…SIWS), 151 to 171 (WNTV…WTAI), 179 to 199 (AIAL…ALAI), 228 to 248 (VWLI…PVFI), and 280 to 300 (FVYS…ISLI).

Belongs to the UbiA prenyltransferase family. Protoheme IX farnesyltransferase subfamily. As to quaternary structure, interacts with CtaA.

Its subcellular location is the cell membrane. The enzyme catalyses heme b + (2E,6E)-farnesyl diphosphate + H2O = Fe(II)-heme o + diphosphate. The protein operates within porphyrin-containing compound metabolism; heme O biosynthesis; heme O from protoheme: step 1/1. In terms of biological role, converts heme B (protoheme IX) to heme O by substitution of the vinyl group on carbon 2 of heme B porphyrin ring with a hydroxyethyl farnesyl side group. This is Protoheme IX farnesyltransferase from Staphylococcus carnosus (strain TM300).